The chain runs to 1524 residues: Protein dispatched homolog 1 (1524 aa).

The N-linked (GlcNAc...) asparagine glycan is linked to Asn59. The next 4 membrane-spanning stretches (helical) occupy residues 190–210 (VVVLGMCTMFIVVCALVGVLV), 500–520 (LLMDTVYPAIAIVIVLLVMCV), 525–545 (MFITLMTMFAIISSLIVSYFL), and 549–569 (VFHFEFFPFMNLTALIILVGI). Residues 486–658 (GIEFGIKHSL…VTWLPAVVVL (173 aa)) form the SSD domain. The N-linked (GlcNAc...) asparagine glycan is linked to Asn582. 8 consecutive transmembrane segments (helical) span residues 604–624 (AALSMFVTSFTTAAAFYANYV), 638–658 (GTAILVNYVLMVTWLPAVVVL), 719–739 (YLWLFWFLALTVGGAYIVCIN), 988–1008 (MGLSVAVAFSVMLLTTWNIII), 1010–1030 (LYAIISIAGTIFVTVGSLVLL), 1040–1060 (VTISVAVGLSVDFAVHYGVAY), 1079–1099 (VGSAMAMAALTTFVAGAMMMP), and 1107–1127 (QLGTFMMLIMCISWAFATFFF).

Belongs to the dispatched family. As to quaternary structure, interacts with SHH via the cholesterol anchor of the dually lipid-modified SHH (ShhNp).

It is found in the membrane. Its function is as follows. Functions in hedgehog (Hh) signaling. Regulates the release and extracellular accumulation of cholesterol-modified hedgehog proteins and is hence required for effective production of the Hh signal. Synergizes with SCUBE2 to cause an increase in SHH secretion. The polypeptide is Protein dispatched homolog 1 (DISP1) (Homo sapiens (Human)).